The chain runs to 490 residues: Bifunctional protein HldE (490 aa).

The ribokinase stretch occupies residues 1–330 (MERKNVESLF…GSMGFQHSDS (330 aa)). 205-208 (NRKE) serves as a coordination point for ATP. The active site involves Asp275. Residues 356–490 (FTNGCFDLLH…DKILRAYGEE (135 aa)) are cytidylyltransferase.

This sequence in the N-terminal section; belongs to the carbohydrate kinase PfkB family. In the C-terminal section; belongs to the cytidylyltransferase family. Homodimer.

It carries out the reaction D-glycero-beta-D-manno-heptose 7-phosphate + ATP = D-glycero-beta-D-manno-heptose 1,7-bisphosphate + ADP + H(+). The catalysed reaction is D-glycero-beta-D-manno-heptose 1-phosphate + ATP + H(+) = ADP-D-glycero-beta-D-manno-heptose + diphosphate. It participates in nucleotide-sugar biosynthesis; ADP-L-glycero-beta-D-manno-heptose biosynthesis; ADP-L-glycero-beta-D-manno-heptose from D-glycero-beta-D-manno-heptose 7-phosphate: step 1/4. Its pathway is nucleotide-sugar biosynthesis; ADP-L-glycero-beta-D-manno-heptose biosynthesis; ADP-L-glycero-beta-D-manno-heptose from D-glycero-beta-D-manno-heptose 7-phosphate: step 3/4. Functionally, catalyzes the phosphorylation of D-glycero-D-manno-heptose 7-phosphate at the C-1 position to selectively form D-glycero-beta-D-manno-heptose-1,7-bisphosphate. Catalyzes the ADP transfer from ATP to D-glycero-beta-D-manno-heptose 1-phosphate, yielding ADP-D-glycero-beta-D-manno-heptose. This chain is Bifunctional protein HldE, found in Geobacter metallireducens (strain ATCC 53774 / DSM 7210 / GS-15).